A 91-amino-acid chain; its full sequence is Small ribosomal subunit protein bS16c (91 aa).

Belongs to the bacterial ribosomal protein bS16 family.

The protein resides in the plastid. It localises to the chloroplast. This is Small ribosomal subunit protein bS16c from Vitis vinifera (Grape).